Reading from the N-terminus, the 260-residue chain is Small ribosomal subunit protein uS2 (260 aa).

A compositionally biased stretch (basic and acidic residues) spans 228–240 (RKETKAENAEEAM). Residues 228–260 (RKETKAENAEEAMKQAAEAEAEAAAPAAEESAE) are disordered. Over residues 241–260 (KQAAEAEAEAAAPAAEESAE) the composition is skewed to low complexity.

This sequence belongs to the universal ribosomal protein uS2 family.

The protein is Small ribosomal subunit protein uS2 of Oleidesulfovibrio alaskensis (strain ATCC BAA-1058 / DSM 17464 / G20) (Desulfovibrio alaskensis).